Here is a 437-residue protein sequence, read N- to C-terminus: Lipid II isoglutaminyl synthase (glutamine-hydrolyzing) subunit MurT (437 aa).

Zn(2+)-binding residues include cysteine 202, cysteine 205, cysteine 224, and cysteine 226. Aspartate 349 is an active-site residue.

Belongs to the MurCDEF family. MurT subfamily. Forms a heterodimer with GatD.

It carries out the reaction beta-D-GlcNAc-(1-&gt;4)-Mur2Ac(oyl-L-Ala-gamma-D-Glu-L-Lys-D-Ala-D-Ala)-di-trans,octa-cis-undecaprenyl diphosphate + L-glutamine + ATP + H2O = beta-D-GlcNAc-(1-&gt;4)-Mur2Ac(oyl-L-Ala-D-isoglutaminyl-L-Lys-D-Ala-D-Ala)-di-trans,octa-cis-undecaprenyl diphosphate + L-glutamate + ADP + phosphate + H(+). The catalysed reaction is beta-D-GlcNAc-(1-&gt;4)-Mur2Ac(oyl-L-Ala-gamma-D-Glu-L-Lys-D-Ala-D-Ala)-di-trans,octa-cis-undecaprenyl diphosphate + ATP = beta-D-GlcNAc-(1-&gt;4)-Mur2Ac(oyl-L-Ala-gamma-D-O-P-Glu-L-Lys-D-Ala-D-Ala)-di-trans,octa-cis-undecaprenyl diphosphate + ADP. The enzyme catalyses beta-D-GlcNAc-(1-&gt;4)-Mur2Ac(oyl-L-Ala-gamma-D-O-P-Glu-L-Lys-D-Ala-D-Ala)-di-trans,octa-cis-undecaprenyl diphosphate + NH4(+) = beta-D-GlcNAc-(1-&gt;4)-Mur2Ac(oyl-L-Ala-D-isoglutaminyl-L-Lys-D-Ala-D-Ala)-di-trans,octa-cis-undecaprenyl diphosphate + phosphate + H(+). It functions in the pathway cell wall biogenesis; peptidoglycan biosynthesis. The lipid II isoglutaminyl synthase complex catalyzes the formation of alpha-D-isoglutamine in the cell wall lipid II stem peptide. The MurT subunit catalyzes the ATP-dependent amidation of D-glutamate residue of lipid II, converting it to an isoglutamine residue. The protein is Lipid II isoglutaminyl synthase (glutamine-hydrolyzing) subunit MurT of Staphylococcus aureus (strain N315).